Consider the following 399-residue polypeptide: Serpin-Z4 (399 aa).

Residues 36–56 (GNVAFSPLSLHVALSLITAGA) are signal for targeting protein Z4 into the ER lumen. The segment at 343–367 (GTEAGAATVAMGVAMSMPLKVDLVD) is RCL.

It belongs to the serpin family. In terms of tissue distribution, highly expressed in embryo and endosperm. Is accumulated and stored in the endosperm, where it exists in a free and a bound form. Expressed in roots, coleoptiles, shoots and leaves.

Its function is as follows. A major component of the endosperm albumin, this protein acts as a storage protein during grain filling, contributing a substantial part of the grain's lysine. May have an inhibitory function during filling or germination. Inhibits cathepsin G in vitro. The polypeptide is Serpin-Z4 (PAZ1) (Hordeum vulgare (Barley)).